A 423-amino-acid chain; its full sequence is Gamma-glutamyl phosphate reductase (423 aa).

Belongs to the gamma-glutamyl phosphate reductase family.

It is found in the cytoplasm. It catalyses the reaction L-glutamate 5-semialdehyde + phosphate + NADP(+) = L-glutamyl 5-phosphate + NADPH + H(+). It functions in the pathway amino-acid biosynthesis; L-proline biosynthesis; L-glutamate 5-semialdehyde from L-glutamate: step 2/2. Functionally, catalyzes the NADPH-dependent reduction of L-glutamate 5-phosphate into L-glutamate 5-semialdehyde and phosphate. The product spontaneously undergoes cyclization to form 1-pyrroline-5-carboxylate. The polypeptide is Gamma-glutamyl phosphate reductase (Burkholderia pseudomallei (strain 1710b)).